A 276-amino-acid chain; its full sequence is Cell division protein FtsQ (276 aa).

Topologically, residues 1–11 (MQYILKLKYYL) are cytoplasmic. The helical transmembrane segment at 12–32 (YNITWKLVFICVMLVLLIVGI) threads the bilayer. Residues 33–276 (HKNIKWVCDY…NVSKGSHDYD (244 aa)) are Periplasmic-facing. Residues 45–115 (GPLSYIIVTG…NTLKINLIEY (71 aa)) form the POTRA domain.

The protein belongs to the FtsQ/DivIB family. FtsQ subfamily. As to quaternary structure, part of a complex composed of FtsB, FtsL and FtsQ.

It localises to the cell inner membrane. Essential cell division protein. May link together the upstream cell division proteins, which are predominantly cytoplasmic, with the downstream cell division proteins, which are predominantly periplasmic. May control correct divisome assembly. The sequence is that of Cell division protein FtsQ from Blochmanniella floridana.